The following is a 568-amino-acid chain: Periplasmic trehalase (568 aa).

The N-terminal stretch at 1-38 (MPHAPARSGDAMSAAAPPCCTSLLGLSLSMFVAPCALA) is a signal peptide. Residues Arg-169, 176 to 177 (WD), Asn-213, 222 to 224 (RSQ), 294 to 296 (RPE), and Gly-327 each bind substrate. Residues Asp-329 and Glu-511 each act as proton donor/acceptor in the active site. Residue Glu-526 participates in substrate binding.

The protein belongs to the glycosyl hydrolase 37 family.

It is found in the periplasm. It catalyses the reaction alpha,alpha-trehalose + H2O = alpha-D-glucose + beta-D-glucose. Provides the cells with the ability to utilize trehalose at high osmolarity by splitting it into glucose molecules that can subsequently be taken up by the phosphotransferase-mediated uptake system. The sequence is that of Periplasmic trehalase from Xanthomonas campestris pv. campestris (strain 8004).